The chain runs to 287 residues: Probable ketose 3-epimerase (287 aa).

Catalysis depends on E152, which acts as the Proton donor/acceptor. E152 and D185 together coordinate Mn(2+). H188 serves as a coordination point for substrate. H211 contacts Mn(2+). Residue R217 coordinates substrate. The Proton donor/acceptor role is filled by E246. E246 is a binding site for Mn(2+).

This sequence belongs to the hyi family. It depends on Mn(2+) as a cofactor.

In terms of biological role, probably catalyzes the epimerization of ketopentoses and/or ketohexoses at the C3 position. This chain is Probable ketose 3-epimerase, found in Synechocystis sp. (strain ATCC 27184 / PCC 6803 / Kazusa).